A 451-amino-acid chain; its full sequence is Tubulin beta-1 chain (451 aa).

The GTP site is built by Gln11, Glu73, Ser142, Gly146, Thr147, Gly148, Asn208, and Asn230. Glu73 contributes to the Mg(2+) binding site. The segment at Gln430–Ala451 is disordered. The span at Thr433–Ala451 shows a compositional bias: acidic residues.

This sequence belongs to the tubulin family. Dimer of alpha and beta chains. A typical microtubule is a hollow water-filled tube with an outer diameter of 25 nm and an inner diameter of 15 nM. Alpha-beta heterodimers associate head-to-tail to form protofilaments running lengthwise along the microtubule wall with the beta-tubulin subunit facing the microtubule plus end conferring a structural polarity. Microtubules usually have 13 protofilaments but different protofilament numbers can be found in some organisms and specialized cells. It depends on Mg(2+) as a cofactor.

The protein resides in the cytoplasm. Its subcellular location is the cytoskeleton. Its function is as follows. Tubulin is the major constituent of microtubules, a cylinder consisting of laterally associated linear protofilaments composed of alpha- and beta-tubulin heterodimers. Microtubules grow by the addition of GTP-tubulin dimers to the microtubule end, where a stabilizing cap forms. Below the cap, tubulin dimers are in GDP-bound state, owing to GTPase activity of alpha-tubulin. This chain is Tubulin beta-1 chain, found in Homarus americanus (American lobster).